The sequence spans 86 residues: Neurotoxin homolog NL1 (86 aa).

A signal peptide spans M1–T21. 4 disulfide bridges follow: C24/C45, C38/C62, C66/C78, and C79/C84.

The protein belongs to the three-finger toxin family. Short-chain subfamily. Orphan group VIII (haditoxin) sub-subfamily. Homodimer; non-covalently linked. In terms of tissue distribution, expressed by the venom gland.

It is found in the secreted. Functionally, antagonist of muscle and neuronal nicotinic acetylcholine receptors (nAChR) with highest affinity for neuronal alpha-7/CHRNA7 nAChRs. The protein is Neurotoxin homolog NL1 of Naja atra (Chinese cobra).